Reading from the N-terminus, the 171-residue chain is MKKIAFFVICVGFPSLIFASASIQESDFIQRVINFVIFVAILWYFAFDSIKGIFVNRRNAISARLQEVQENLHKAKREKETAQKRLEESKEKAKNIVNAAKQEAYLLEQKYNDQIKKDIETLKYALESNIEFERRKITHEAVDELLNKLIQSDDVQLNKEDYVNIITKRIS.

Residues 4–24 form a helical membrane-spanning segment; it reads IAFFVICVGFPSLIFASASIQ.

This sequence belongs to the ATPase B chain family. F-type ATPases have 2 components, F(1) - the catalytic core - and F(0) - the membrane proton channel. F(1) has five subunits: alpha(3), beta(3), gamma(1), delta(1), epsilon(1). F(0) has three main subunits: a(1), b(2) and c(10-14). The alpha and beta chains form an alternating ring which encloses part of the gamma chain. F(1) is attached to F(0) by a central stalk formed by the gamma and epsilon chains, while a peripheral stalk is formed by the delta and b chains.

The protein localises to the cell inner membrane. F(1)F(0) ATP synthase produces ATP from ADP in the presence of a proton or sodium gradient. F-type ATPases consist of two structural domains, F(1) containing the extramembraneous catalytic core and F(0) containing the membrane proton channel, linked together by a central stalk and a peripheral stalk. During catalysis, ATP synthesis in the catalytic domain of F(1) is coupled via a rotary mechanism of the central stalk subunits to proton translocation. In terms of biological role, component of the F(0) channel, it forms part of the peripheral stalk, linking F(1) to F(0). This chain is ATP synthase subunit b, found in Helicobacter hepaticus (strain ATCC 51449 / 3B1).